The following is a 521-amino-acid chain: Peroxisomal membrane protein PEX23 (521 aa).

A disordered region spans residues 1-26 (MPTDPNSNPVSKAGLTPSSINSNISE). 2 N-linked (GlcNAc...) asparagine glycosylation sites follow: Asn-23 and Asn-53. The next 2 helical transmembrane spans lie at 111 to 128 (SYISVLLVTTATLFILYF) and 133 to 150 (IYLGHLSIVGLIFLYSIF). Residue Asn-189 is glycosylated (N-linked (GlcNAc...) asparagine). A helical membrane pass occupies residues 198–217 (LLFTSIFLSPGYILVCYLLF). Asn-279 carries an N-linked (GlcNAc...) asparagine glycan. Residues 425–446 (VSPGDDSSTDSASLPHSASETV) form a disordered region. A compositionally biased stretch (polar residues) spans 429–446 (DDSSTDSASLPHSASETV). N-linked (GlcNAc...) asparagine glycosylation is found at Asn-463 and Asn-467. Residues 465–486 (SGNITTSAETAPDSAGTAKKRK) form a disordered region.

The protein belongs to the PEX28-32 family. PEX32 subfamily.

Its subcellular location is the endoplasmic reticulum membrane. In terms of biological role, with PEX29, contributes to the formation of endoplasmic reticulum-mitochondria junctions which are important for mitochondrial function. Involved in lipid dropplets formation. The polypeptide is Peroxisomal membrane protein PEX23 (Ogataea parapolymorpha (strain ATCC 26012 / BCRC 20466 / JCM 22074 / NRRL Y-7560 / DL-1) (Yeast)).